The primary structure comprises 151 residues: Epigen (151 aa).

Residues 1 to 18 form the signal peptide; sequence MAFGMLIYILLKAMGALS. Residues 19 to 108 lie on the Extracellular side of the membrane; sequence EEAALTASSL…NSYAHNSYER (90 aa). N-linked (GlcNAc...) asparagine glycosylation is present at Asn39. The EGF-like domain occupies 54 to 94; it reads LMQTCLEEHHSYCINGLCAFHSELRKPICKCLAGYNGERCE. Cystine bridges form between Cys58–Cys71, Cys66–Cys82, and Cys84–Cys93. Residues 109 to 129 form a helical membrane-spanning segment; that stretch reads YIAVGIGIGILTSGILAIIYC. Topologically, residues 130–151 are cytoplasmic; the sequence is YVRKRCRKLKSPYKVCMGETAL.

Its subcellular location is the membrane. In terms of biological role, promotes the growth of epithelial cells. The sequence is that of Epigen (EPGN) from Gallus gallus (Chicken).